Reading from the N-terminus, the 542-residue chain is Global nitrogen regulator NrpR (542 aa).

Residues 12–77 form a winged helix-turn-helix region; sequence IEILDILSKS…VITERGLEEL (66 aa). NRD regions lie at residues 85 to 320 and 321 to 542; these read RLGS…KANI and RIKT…YKEI.

Belongs to the NrpR family. As to quaternary structure, homodimer.

Under nitrogen limitation, binding of the intracellular nitrogen metabolite 2-oxoglutarate to NrpR decreases the binding affinity of NrpR to DNA, leading to initiation of transcription. Transcriptional repressor of nitrogen fixation and assimilation genes. Binds to two tandem operators in the glnA and nif promoters, thereby blocking transcription of the genes. The protein is Global nitrogen regulator NrpR of Methanocaldococcus jannaschii (strain ATCC 43067 / DSM 2661 / JAL-1 / JCM 10045 / NBRC 100440) (Methanococcus jannaschii).